A 270-amino-acid polypeptide reads, in one-letter code: Replication protein A 32 kDa subunit (270 aa).

Met-1 bears the N-acetylmethionine mark. Residues Ser-4 and Ser-8 each carry the phosphoserine; by PRKDC modification. Residues 20 to 41 form a disordered region; the sequence is YTQSPGGFGSPTPSQAEKKSRV. Phosphothreonine; by PRKDC is present on Thr-21. Ser-23 carries the phosphoserine; by CDK2 modification. At Ser-29 the chain carries Phosphoserine; by CDK1. Ser-33 carries the phosphoserine; by PRKDC modification. Residues Lys-37 and Lys-38 each participate in a glycyl lysine isopeptide (Lys-Gly) (interchain with G-Cter in ubiquitin) cross-link. The segment at residues 74–148 is a DNA-binding region (OB); that stretch reads VTIVGIIRHA…KSLVAFKIIP (75 aa). Positions 171-192 are disordered; the sequence is KPNSQASAGRPSMSNPGMSEPG. Residues 187–270 are interaction with RAD52, TIPIN, UNG and XPA; it reads GMSEPGNFSG…DDHFKSTDAE (84 aa).

The protein belongs to the replication factor A protein 2 family. Component of the replication protein A complex (RPA/RP-A), a heterotrimeric complex composed of RPA1, RPA2 and RPA3. Interacts with PRPF19; the PRP19-CDC5L complex is recruited to the sites of DNA repair where it ubiquitinates the replication protein A complex (RPA). Interacts with SERTAD3. Interacts with TIPIN. Interacts with TIMELESS. Interacts with PPP4R2; the interaction is direct, DNA damage-dependent and mediates the recruitment of the PP4 catalytic subunit PPP4C. Interacts (hyperphosphorylated) with RAD51. Interacts with SMARCAL1; the interaction is direct and mediates the recruitment to the RPA complex of SMARCAL1. Interacts with RAD52 and XPA; those interactions are direct and associate RAD52 and XPA to the RPA complex. Interacts with FBH1. Interacts with ETAA1; the interaction is direct and promotes ETAA1 recruitment at stalled replication forks. Interacts with DDI2. Interacts (in unphosphorylated form via N-terminus) with EIF4EBP3; the interaction enhances EIF4EBP3-mediated inhibition of EIF4E-mediated mRNA nuclear export. Interacts with nuclear UNG (isoform 2); this interaction mediates UNG recruitment to RPA-coated single-stranded DNA at stalled replication forks. In terms of processing, differentially phosphorylated throughout the cell cycle, becoming phosphorylated at the G1-S transition and dephosphorylated in late mitosis. Mainly phosphorylated at Ser-23 and Ser-29, by cyclin A-CDK2 and cyclin B-CDK1, respectively during DNA replication and mitosis. Dephosphorylation may require the serine/threonine-protein phosphatase 4. Phosphorylation at Ser-23 and Ser-29 is a prerequisite for further phosphorylation. Becomes hyperphosphorylated on additional residues including Ser-4, Ser-8, Thr-21 and Ser-33 in response to DNA damage. Hyperphosphorylation is mediated by ATM, ATR and PRKDC. Primarily recruited to DNA repair nuclear foci as a hypophosphorylated form it undergoes subsequent hyperphosphorylation, catalyzed by ATR. Hyperphosphorylation is required for RAD51 recruitment to chromatin and efficient DNA repair. Phosphorylation at Thr-21 depends upon RFWD3 presence. Post-translationally, DNA damage-induced 'Lys-63'-linked polyubiquitination by PRPF19 mediates ATRIP recruitment to the RPA complex at sites of DNA damage and activation of ATR. Ubiquitinated by RFWD3 at stalled replication forks in response to DNA damage: ubiquitination by RFWD3 does not lead to degradation by the proteasome and promotes removal of the RPA complex from stalled replication forks, promoting homologous recombination.

Its subcellular location is the nucleus. The protein localises to the PML body. Functionally, as part of the heterotrimeric replication protein A complex (RPA/RP-A), binds and stabilizes single-stranded DNA intermediates, that form during DNA replication or upon DNA stress. It prevents their reannealing and in parallel, recruits and activates different proteins and complexes involved in DNA metabolism. Thereby, it plays an essential role both in DNA replication and the cellular response to DNA damage. In the cellular response to DNA damage, the RPA complex controls DNA repair and DNA damage checkpoint activation. Through recruitment of ATRIP activates the ATR kinase a master regulator of the DNA damage response. It is required for the recruitment of the DNA double-strand break repair factors RAD51 and RAD52 to chromatin in response to DNA damage. Also recruits to sites of DNA damage proteins like XPA and XPG that are involved in nucleotide excision repair and is required for this mechanism of DNA repair. Also plays a role in base excision repair (BER) probably through interaction with UNG. Also recruits SMARCAL1/HARP, which is involved in replication fork restart, to sites of DNA damage. May also play a role in telomere maintenance. This Mus musculus (Mouse) protein is Replication protein A 32 kDa subunit.